The chain runs to 141 residues: Lutropin subunit beta (141 aa).

Residues Met1–Ala20 form the signal peptide. Ser21 is modified (blocked amino end (Ser)). 6 cysteine pairs are disulfide-bonded: Cys29-Cys77, Cys43-Cys92, Cys46-Cys130, Cys54-Cys108, Cys58-Cys110, and Cys113-Cys120. Asn33 is a glycosylation site (N-linked (GlcNAc...) asparagine).

Belongs to the glycoprotein hormones subunit beta family. As to quaternary structure, heterodimer of a common alpha chain and a unique beta chain which confers biological specificity to thyrotropin, lutropin, follitropin and gonadotropin.

The protein localises to the secreted. Its function is as follows. Promotes spermatogenesis and ovulation by stimulating the testes and ovaries to synthesize steroids. The protein is Lutropin subunit beta (LHB) of Sus scrofa (Pig).